We begin with the raw amino-acid sequence, 395 residues long: Carbohydrate sulfotransferase 5 (395 aa).

Over 1-7 (MRLPRFS) the chain is Cytoplasmic. The helical; Signal-anchor for type II membrane protein transmembrane segment at 8-26 (STVMLSLLMVQTGILVFLV) threads the bilayer. The Lumenal segment spans residues 27–395 (SRQVPSSPAG…ASSTEKQPES (369 aa)). Position 49–55 (49–55 (WRSGSSF)) interacts with 3'-phosphoadenylyl sulfate. Residues N116 and N142 are each glycosylated (N-linked (GlcNAc...) asparagine). Position 202–210 (202–210 (RDPRAVLRS)) interacts with 3'-phosphoadenylyl sulfate. 2 N-linked (GlcNAc...) asparagine glycosylation sites follow: N229 and N305.

It belongs to the sulfotransferase 1 family. Gal/GlcNAc/GalNAc subfamily. In terms of tissue distribution, expressed in cornea.

The protein localises to the golgi apparatus membrane. Sulfotransferase that utilizes 3'-phospho-5'-adenylyl sulfate (PAPS) as sulfonate donor to catalyze the transfer of sulfate to position 6 of non-reducing N-acetylglucosamine (GlcNAc) residues of keratan. Mediates sulfation of keratan in cornea. Keratan sulfate plays a central role in maintaining corneal transparency. Acts on the non-reducing terminal GlcNAc of short and long carbohydrate substrates that have poly-N-acetyllactosamine structures. May also have activity toward O-linked sugars of mucin-type acceptors. The polypeptide is Carbohydrate sulfotransferase 5 (Chst5) (Mus musculus (Mouse)).